The chain runs to 164 residues: ATP synthase subunit b (164 aa).

The chain crosses the membrane as a helical span at residues 8-28 (IGLFFWQTIVFLILLFLMAKF).

Belongs to the ATPase B chain family. As to quaternary structure, F-type ATPases have 2 components, F(1) - the catalytic core - and F(0) - the membrane proton channel. F(1) has five subunits: alpha(3), beta(3), gamma(1), delta(1), epsilon(1). F(0) has three main subunits: a(1), b(2) and c(10-14). The alpha and beta chains form an alternating ring which encloses part of the gamma chain. F(1) is attached to F(0) by a central stalk formed by the gamma and epsilon chains, while a peripheral stalk is formed by the delta and b chains.

The protein localises to the cell membrane. F(1)F(0) ATP synthase produces ATP from ADP in the presence of a proton or sodium gradient. F-type ATPases consist of two structural domains, F(1) containing the extramembraneous catalytic core and F(0) containing the membrane proton channel, linked together by a central stalk and a peripheral stalk. During catalysis, ATP synthesis in the catalytic domain of F(1) is coupled via a rotary mechanism of the central stalk subunits to proton translocation. Functionally, component of the F(0) channel, it forms part of the peripheral stalk, linking F(1) to F(0). The polypeptide is ATP synthase subunit b (Christiangramia forsetii (strain DSM 17595 / CGMCC 1.15422 / KT0803) (Gramella forsetii)).